A 786-amino-acid polypeptide reads, in one-letter code: m7GpppN-mRNA hydrolase dcap-2 (786 aa).

Over residues 25–61 (QKQNKSTEEPPSSVQKLLASLQQAQNKSDLSEQPSTS) the composition is skewed to polar residues. The disordered stretch occupies residues 25–148 (QKQNKSTEEP…QQQQQYKGPR (124 aa)). The segment covering 62 to 72 (KPKKNEKRKKA) has biased composition (basic residues). Polar residues-rich tracts occupy residues 101-111 (MQQQAENARIS) and 118-133 (QVSTSKGSSRNTTAPE). Residues 134–144 (QQNYQQQQQQY) are compositionally biased toward low complexity. A Nudix hydrolase domain is found at 238–366 (STVPTYGAIL…LPAYLQGNKF (129 aa)). The short motif at 273-294 (GKINQAEPPRDAAIRETFEETG) is the Nudix box element. Mg(2+)-binding residues include Glu-288 and Glu-292. Disordered stretches follow at residues 556–576 (IMHSPNHPLPPTSNSPATPTA) and 623–655 (ISSTQKQSIPKATAAPPSTEKTRSASLSGSSQV). Polar residues-rich tracts occupy residues 623 to 632 (ISSTQKQSIP) and 646 to 655 (SASLSGSSQV).

It belongs to the Nudix hydrolase family. DCP2 subfamily. May be a component of the decapping complex composed of dcap-1 and dcap-2. Mg(2+) is required as a cofactor. Mn(2+) serves as cofactor. In terms of tissue distribution, expressed in sensory neurons.

Its subcellular location is the cytoplasmic granule. It localises to the cytoplasm. The protein resides in the perinuclear region. The catalysed reaction is a 5'-end (N(7)-methyl 5'-triphosphoguanosine)-ribonucleoside in mRNA + H2O = N(7)-methyl-GDP + a 5'-end phospho-ribonucleoside in mRNA + 2 H(+). It carries out the reaction a 5'-end (N(2),N(2),N(7)-trimethyl 5'-triphosphoguanosine)-ribonucleoside in mRNA + H2O = N(2),N(2),N(7)-trimethyl-GDP + a 5'-end phospho-ribonucleoside in mRNA + 2 H(+). Its activity is regulated as follows. Inhibited by capped and uncapped RNA. Not inhibited by dinucleotide cap or methylated nucleotide analogs. Functionally, decapping metalloenzyme that catalyzes the cleavage of the cap structure on mRNAs. Removes the 7-methyl guanine cap structure from mRNA molecules, yielding a 5'-phosphorylated mRNA fragment and 7m-GDP. RNA-decapping enzyme although it does not bind the RNA cap. May contribute to gene regulation in multiple RNA pathways including monomethylguanosine- and trimethylguanosine-capped RNAs. In oocytes, may play a role in the response to stress induced by heat shock, osmotic stress and anoxia. Required for the developmental axon guidance and regrowth of PLM touch receptor neurons. Early in embryogenesis, plays a role in ciliary shape formation in sensory neurons. Promotes survival at high temperatures. The protein is m7GpppN-mRNA hydrolase dcap-2 of Caenorhabditis elegans.